Here is a 173-residue protein sequence, read N- to C-terminus: Translation initiation factor IF-3 (173 aa).

The protein belongs to the IF-3 family. In terms of assembly, monomer.

It is found in the cytoplasm. IF-3 binds to the 30S ribosomal subunit and shifts the equilibrium between 70S ribosomes and their 50S and 30S subunits in favor of the free subunits, thus enhancing the availability of 30S subunits on which protein synthesis initiation begins. The protein is Translation initiation factor IF-3 of Methylobacterium radiotolerans (strain ATCC 27329 / DSM 1819 / JCM 2831 / NBRC 15690 / NCIMB 10815 / 0-1).